The sequence spans 140 residues: MKTFNISQQDLELVEVATEKITMLYEDNKHHVGAAIRTKTGEIISAVHIEAYIGRVTVCAEAIAIGSAVSNGQKDFDTIVAVRHPYSDEVDRSIRVVSPCGMCRELISDYAPDCFVLIEMNGKLVKTTIEELIPLKYTRN.

The CMP/dCMP-type deaminase domain occupies Gln8–Asn140. Cys59 is a Zn(2+) binding site. The Proton donor role is filled by Glu61. Residues Cys100 and Cys103 each contribute to the Zn(2+) site.

Belongs to the cytidine and deoxycytidylate deaminase family. Zn(2+) serves as cofactor.

The enzyme catalyses blasticidin S + H2O + H(+) = deaminohydroxyblasticidin S + NH4(+). Its function is as follows. Catalyzes the deamination of the cytosine moiety of the antibiotics blasticidin S, cytomycin and acetylblasticidin S. The chain is Blasticidin-S deaminase (bsr) from Bacillus cereus.